Here is a 275-residue protein sequence, read N- to C-terminus: Dermonecrotic toxin SpeSicTox-betaIIA2ii (275 aa).

The active site involves His-5. Mg(2+) is bound by residues Glu-25 and Asp-27. The Nucleophile role is filled by His-41. 2 disulfides stabilise this stretch: Cys-45–Cys-51 and Cys-47–Cys-190. Mg(2+) is bound at residue Asp-85.

This sequence belongs to the arthropod phospholipase D family. Class II subfamily. Requires Mg(2+) as cofactor. As to expression, expressed by the venom gland.

It localises to the secreted. It catalyses the reaction an N-(acyl)-sphingosylphosphocholine = an N-(acyl)-sphingosyl-1,3-cyclic phosphate + choline. The enzyme catalyses an N-(acyl)-sphingosylphosphoethanolamine = an N-(acyl)-sphingosyl-1,3-cyclic phosphate + ethanolamine. The catalysed reaction is a 1-acyl-sn-glycero-3-phosphocholine = a 1-acyl-sn-glycero-2,3-cyclic phosphate + choline. It carries out the reaction a 1-acyl-sn-glycero-3-phosphoethanolamine = a 1-acyl-sn-glycero-2,3-cyclic phosphate + ethanolamine. In terms of biological role, dermonecrotic toxins cleave the phosphodiester linkage between the phosphate and headgroup of certain phospholipids (sphingolipid and lysolipid substrates), forming an alcohol (often choline) and a cyclic phosphate. This toxin acts on sphingomyelin (SM). It may also act on ceramide phosphoethanolamine (CPE), lysophosphatidylcholine (LPC) and lysophosphatidylethanolamine (LPE), but not on lysophosphatidylserine (LPS), and lysophosphatidylglycerol (LPG). It acts by transphosphatidylation, releasing exclusively cyclic phosphate products as second products. Induces dermonecrosis, hemolysis, increased vascular permeability, edema, inflammatory response, and platelet aggregation. This Sicarius peruensis (Six-eyed sand spider) protein is Dermonecrotic toxin SpeSicTox-betaIIA2ii.